We begin with the raw amino-acid sequence, 320 residues long: TATA box-binding protein-like 2 (320 aa).

This sequence belongs to the TBP family. In terms of tissue distribution, expression is restricted to the gonads, and is higher in the ovary than the testis.

The protein localises to the nucleus. Functionally, TATA box-binding transcription factor. Members of the TBP family are differentially required to regulate transcription and development during early embryogenesis. Required for gastrulation. Regulates a large subset of genes that are ventrally expressed. Binds to a subset of promoters. This Xenopus laevis (African clawed frog) protein is TATA box-binding protein-like 2.